We begin with the raw amino-acid sequence, 179 residues long: Orotate phosphoribosyltransferase (179 aa).

5-phospho-alpha-D-ribose 1-diphosphate contacts are provided by residues arginine 94, lysine 95, lysine 98, histidine 100, and 120–128 (EDTSTTGNS). Orotate is bound by residues threonine 124 and arginine 152.

It belongs to the purine/pyrimidine phosphoribosyltransferase family. PyrE subfamily. In terms of assembly, homodimer. The cofactor is Mg(2+).

It carries out the reaction orotidine 5'-phosphate + diphosphate = orotate + 5-phospho-alpha-D-ribose 1-diphosphate. Its pathway is pyrimidine metabolism; UMP biosynthesis via de novo pathway; UMP from orotate: step 1/2. In terms of biological role, catalyzes the transfer of a ribosyl phosphate group from 5-phosphoribose 1-diphosphate to orotate, leading to the formation of orotidine monophosphate (OMP). The sequence is that of Orotate phosphoribosyltransferase from Mycobacterium bovis (strain ATCC BAA-935 / AF2122/97).